The following is a 158-amino-acid chain: UPF0311 protein CA_C3321 (158 aa).

The protein belongs to the UPF0311 family.

This Clostridium acetobutylicum (strain ATCC 824 / DSM 792 / JCM 1419 / IAM 19013 / LMG 5710 / NBRC 13948 / NRRL B-527 / VKM B-1787 / 2291 / W) protein is UPF0311 protein CA_C3321.